The sequence spans 154 residues: Endoribonuclease YbeY (154 aa).

Zn(2+) is bound by residues histidine 113, histidine 117, and histidine 123.

It belongs to the endoribonuclease YbeY family. Zn(2+) is required as a cofactor.

It localises to the cytoplasm. Its function is as follows. Single strand-specific metallo-endoribonuclease involved in late-stage 70S ribosome quality control and in maturation of the 3' terminus of the 16S rRNA. This is Endoribonuclease YbeY from Anaplasma marginale (strain Florida).